The following is a 328-amino-acid chain: GTPase Obg (328 aa).

The Obg domain maps to 2 to 160 (YNFKDSVSIT…LNVRLELFLV (159 aa)). In terms of domain architecture, OBG-type G spans 161-326 (ADIGLVGLPN…LIKEFFVLAK (166 aa)). GTP-binding positions include 167 to 174 (GLPNAGKS), 192 to 196 (FTTKI), 213 to 216 (DIPG), 280 to 283 (NKLD), and 307 to 309 (SIY). Positions 174 and 194 each coordinate Mg(2+).

The protein belongs to the TRAFAC class OBG-HflX-like GTPase superfamily. OBG GTPase family. Monomer. Mg(2+) is required as a cofactor.

The protein localises to the cytoplasm. In terms of biological role, an essential GTPase which binds GTP, GDP and possibly (p)ppGpp with moderate affinity, with high nucleotide exchange rates and a fairly low GTP hydrolysis rate. Plays a role in control of the cell cycle, stress response, ribosome biogenesis and in those bacteria that undergo differentiation, in morphogenesis control. The protein is GTPase Obg of Borreliella afzelii (strain PKo) (Borrelia afzelii).